We begin with the raw amino-acid sequence, 530 residues long: Autoinducer-2 kinase (530 aa).

Belongs to the FGGY kinase family.

It localises to the cytoplasm. The enzyme catalyses (S)-4,5-dihydroxypentane-2,3-dione + ATP = (2S)-2-hydroxy-3,4-dioxopentyl phosphate + ADP + H(+). Its function is as follows. Catalyzes the phosphorylation of autoinducer-2 (AI-2) to phospho-AI-2, which subsequently inactivates the transcriptional regulator LsrR and leads to the transcription of the lsr operon. Phosphorylates the ring-open form of (S)-4,5-dihydroxypentane-2,3-dione (DPD), which is the precursor to all AI-2 signaling molecules, at the C5 position. The polypeptide is Autoinducer-2 kinase (Escherichia coli (strain SMS-3-5 / SECEC)).